The primary structure comprises 308 residues: Acetyl-coenzyme A carboxylase carboxyl transferase subunit beta (308 aa).

In terms of domain architecture, CoA carboxyltransferase N-terminal spans 26-295 (LWIKDPETGE…EQKPLEPEIL (270 aa)).

This sequence belongs to the AccD/PCCB family. In terms of assembly, acetyl-CoA carboxylase is a heterohexamer composed of biotin carboxyl carrier protein (AccB), biotin carboxylase (AccC) and two subunits each of ACCase subunit alpha (AccA) and ACCase subunit beta (AccD).

Its subcellular location is the cytoplasm. It catalyses the reaction N(6)-carboxybiotinyl-L-lysyl-[protein] + acetyl-CoA = N(6)-biotinyl-L-lysyl-[protein] + malonyl-CoA. It functions in the pathway lipid metabolism; malonyl-CoA biosynthesis; malonyl-CoA from acetyl-CoA: step 1/1. Component of the acetyl coenzyme A carboxylase (ACC) complex. Biotin carboxylase (BC) catalyzes the carboxylation of biotin on its carrier protein (BCCP) and then the CO(2) group is transferred by the transcarboxylase to acetyl-CoA to form malonyl-CoA. In Mesorhizobium japonicum (strain LMG 29417 / CECT 9101 / MAFF 303099) (Mesorhizobium loti (strain MAFF 303099)), this protein is Acetyl-coenzyme A carboxylase carboxyl transferase subunit beta.